Consider the following 266-residue polypeptide: MPISVPQATELKDLFSLKGKVVIVTGASGPTGIGTEAARGCAEYGADLAITYNSRAEGAEKNAKEMSEKYGVKVKAYKCQVNEYAQCEKLVQDVIKDFGKVDVFIANAGKTADNGILDATVEQWNEVIQTDLTGTFNCARAVGLHFRERKTGSLVITSSMSGHIANFPQEQASYNVAKAGCIHLAKSLANEWRDFARVNSISPGYIDTGLSDFVPQDIQKLWHSMIPMGRDAKATELKGAYVYFASDASSYCTGSDLLIDGGYCVR.

4 residues coordinate NADP(+): Thr-31, Ile-33, Asn-107, and Arg-140. The active-site Proton donor is the Ser-159. NADP(+) is bound by residues Tyr-174, Lys-178, Ile-206, and Thr-208. Tyr-174 acts as the Proton acceptor in catalysis. Catalysis depends on Lys-178, which acts as the Lowers pKa of active site Tyr.

This sequence belongs to the short-chain dehydrogenases/reductases (SDR) family. Homotetramer.

It localises to the vacuole. It catalyses the reaction D-mannitol + NADP(+) = D-fructose + NADPH + H(+). This is NADP-dependent mannitol dehydrogenase from Alternaria alternata (Alternaria rot fungus).